We begin with the raw amino-acid sequence, 140 residues long: Nucleoside diphosphate kinase (140 aa).

ATP-binding residues include Lys11, Phe59, Arg87, Thr93, Arg104, and Asn114. Residue His117 is the Pros-phosphohistidine intermediate of the active site.

It belongs to the NDK family. As to quaternary structure, homotetramer. Mg(2+) serves as cofactor.

It is found in the cytoplasm. It catalyses the reaction a 2'-deoxyribonucleoside 5'-diphosphate + ATP = a 2'-deoxyribonucleoside 5'-triphosphate + ADP. The enzyme catalyses a ribonucleoside 5'-diphosphate + ATP = a ribonucleoside 5'-triphosphate + ADP. Its function is as follows. Major role in the synthesis of nucleoside triphosphates other than ATP. The ATP gamma phosphate is transferred to the NDP beta phosphate via a ping-pong mechanism, using a phosphorylated active-site intermediate. The chain is Nucleoside diphosphate kinase from Bradyrhizobium sp. (strain ORS 278).